The sequence spans 803 residues: Phosphoribosylformylglycinamidine synthase subunit PurL (803 aa).

The active site involves His65. ATP-binding residues include Tyr68 and Lys107. Glu109 is a Mg(2+) binding site. Residues 110–113 (SHNH) and Arg132 contribute to the substrate site. The Proton acceptor role is filled by His111. Asp133 provides a ligand contact to Mg(2+). A substrate-binding site is contributed by Gln256. Residue Asp284 coordinates Mg(2+). 328–330 (ESQ) contacts substrate. ATP contacts are provided by Asn537 and Gly574. Asn575 serves as a coordination point for Mg(2+). Ser577 contributes to the substrate binding site.

It belongs to the FGAMS family. In terms of assembly, monomer. Part of the FGAM synthase complex composed of 1 PurL, 1 PurQ and 2 PurS subunits.

Its subcellular location is the cytoplasm. It catalyses the reaction N(2)-formyl-N(1)-(5-phospho-beta-D-ribosyl)glycinamide + L-glutamine + ATP + H2O = 2-formamido-N(1)-(5-O-phospho-beta-D-ribosyl)acetamidine + L-glutamate + ADP + phosphate + H(+). The protein operates within purine metabolism; IMP biosynthesis via de novo pathway; 5-amino-1-(5-phospho-D-ribosyl)imidazole from N(2)-formyl-N(1)-(5-phospho-D-ribosyl)glycinamide: step 1/2. Part of the phosphoribosylformylglycinamidine synthase complex involved in the purines biosynthetic pathway. Catalyzes the ATP-dependent conversion of formylglycinamide ribonucleotide (FGAR) and glutamine to yield formylglycinamidine ribonucleotide (FGAM) and glutamate. The FGAM synthase complex is composed of three subunits. PurQ produces an ammonia molecule by converting glutamine to glutamate. PurL transfers the ammonia molecule to FGAR to form FGAM in an ATP-dependent manner. PurS interacts with PurQ and PurL and is thought to assist in the transfer of the ammonia molecule from PurQ to PurL. The polypeptide is Phosphoribosylformylglycinamidine synthase subunit PurL (Prochlorococcus marinus (strain NATL1A)).